Consider the following 410-residue polypeptide: Serine hydroxymethyltransferase (410 aa).

(6S)-5,6,7,8-tetrahydrofolate contacts are provided by residues L116 and G120–L122. K225 is subject to N6-(pyridoxal phosphate)lysine.

This sequence belongs to the SHMT family. In terms of assembly, homodimer. It depends on pyridoxal 5'-phosphate as a cofactor.

Its subcellular location is the cytoplasm. It carries out the reaction (6R)-5,10-methylene-5,6,7,8-tetrahydrofolate + glycine + H2O = (6S)-5,6,7,8-tetrahydrofolate + L-serine. It participates in one-carbon metabolism; tetrahydrofolate interconversion. The protein operates within amino-acid biosynthesis; glycine biosynthesis; glycine from L-serine: step 1/1. Functionally, catalyzes the reversible interconversion of serine and glycine with tetrahydrofolate (THF) serving as the one-carbon carrier. This reaction serves as the major source of one-carbon groups required for the biosynthesis of purines, thymidylate, methionine, and other important biomolecules. Also exhibits THF-independent aldolase activity toward beta-hydroxyamino acids, producing glycine and aldehydes, via a retro-aldol mechanism. The sequence is that of Serine hydroxymethyltransferase from Lacticaseibacillus casei (strain BL23) (Lactobacillus casei).